The primary structure comprises 518 residues: G-protein coupled receptor 161 (518 aa).

Residues 1–26 (MNSSSDGANEGAGAAADNGPTKVAES) are Extracellular-facing. N2 carries an N-linked (GlcNAc...) asparagine glycan. A helical membrane pass occupies residues 27–47 (IAIIIIDILICLGNLVIVVTL). Over 48–59 (YKKSYLLSLSNK) the chain is Cytoplasmic. The helical transmembrane segment at 60–80 (FVFSLTFSNLLLSMLVLPFVV) threads the bilayer. Residues 81 to 97 (VSSILREWIFGVVWCNF) lie on the Extracellular side of the membrane. A disulfide bond links C95 and C173. A glycan (N-linked (GlcNAc...) asparagine) is linked at N96. A helical transmembrane segment spans residues 98-118 (SALLYMLISSASMLTLGIIAI). Over 119–138 (DRYYAVLYPMVYPMKITGNR) the chain is Cytoplasmic. Residues 139–159 (AVLALVYVWLHSLIGCLPPLF) traverse the membrane as a helical segment. Residues 160-185 (GWSTLEFDHFKWMCVAAWHKEAGYTA) are Extracellular-facing. Residues 186–206 (FWQVWCALLPFIVMMICYGFI) form a helical membrane-spanning segment. Residues 207-264 (FRVARIKARKIHCGTVIIVQEASQKNGRKNSSTSTSSSGSRKNGFSSIVYSANQCKAL) lie on the Cytoplasmic side of the membrane. Residues 265–285 (ITILVVIGAFVLTWGPYMIVI) form a helical membrane-spanning segment. Residues 286 to 301 (STEALKGKNSVSPVLE) are Extracellular-facing. The helical transmembrane segment at 302 to 322 (TLATWLSFTSAICHPLIYGLW) threads the bilayer. The Cytoplasmic segment spans residues 323–518 (NKTVRKELLG…GNIETSKCDV (196 aa)). The interval 429 to 448 (EVEQKNDARTMPTQPTAPSE) is disordered. Polar residues predominate over residues 439–448 (MPTQPTAPSE).

The protein belongs to the G-protein coupled receptor 1 family.

The protein resides in the cell projection. Its subcellular location is the cilium membrane. It localises to the cell membrane. Functionally, key negative regulator of Shh signaling during neural tube development. Recruited to primary cilia and acts as a regulator of the PKA-dependent basal repression machinery in Shh signaling by increasing cAMP levels, leading to promote the PKA-dependent processing of gli3 into gli3r and repress the Shh signaling. In presence of shh, it is removed from primary cilia, preventing its activity and allowing activation of the Shh signaling. The sequence is that of G-protein coupled receptor 161 (gpr161) from Xenopus tropicalis (Western clawed frog).